A 254-amino-acid chain; its full sequence is 30 kDa major early protein (254 aa).

This chain is 30 kDa major early protein, found in Human cytomegalovirus (strain Eisenhardt) (HHV-5).